We begin with the raw amino-acid sequence, 314 residues long: Secreted frizzled-related protein 1 (314 aa).

Positions 1–31 (MGIGRSEGGRRGAALGVLLALGAALLAVGSA) are cleaved as a signal peptide. The 117-residue stretch at 53–169 (TKPPQCVDIP…FPEGDVCIAM (117 aa)) folds into the FZ domain. 5 cysteine pairs are disulfide-bonded: C58-C121, C68-C114, C105-C140, C129-C166, and C133-C157. A glycan (N-linked (GlcNAc...) asparagine) is linked at N173. 3 disulfide bridges follow: C186/C256, C189/C258, and C203/C306. The NTR domain occupies 186-306 (CPPCDNELKS…FMKKMKNHEC (121 aa)).

Belongs to the secreted frizzled-related protein (sFRP) family. Interacts with WNT1, WNT2 and FRZD6. Interacts with WNT4, WNT8 and MYOC. As to expression, widely expressed. Absent from lung, liver and peripheral blood leukocytes. Highest levels in heart and fetal kidney. Also expressed in testis, ovary, fetal brain and lung, leiomyomal cells, myometrial cells and vascular smooth muscle cells. Expressed in foreskin fibroblasts and in keratinocytes.

The protein resides in the secreted. Its function is as follows. Soluble frizzled-related proteins (sFRPS) function as modulators of Wnt signaling through direct interaction with Wnts. They have a role in regulating cell growth and differentiation in specific cell types. SFRP1 decreases intracellular beta-catenin levels. Has antiproliferative effects on vascular cells, in vitro and in vivo, and can induce, in vivo, an angiogenic response. In vascular cell cycle, delays the G1 phase and entry into the S phase. In kidney development, inhibits tubule formation and bud growth in metanephroi. Inhibits WNT1/WNT4-mediated TCF-dependent transcription. The chain is Secreted frizzled-related protein 1 (SFRP1) from Homo sapiens (Human).